A 41-amino-acid chain; its full sequence is Virescein (41 aa).

Position 41 is a histidine amide (His41).

As to quaternary structure, monomer. As to expression, hemolymph.

It localises to the secreted. Functionally, has antibacterial activity against Gram-positive and Gram-negative bacteria. This Heliothis virescens (Tobacco budworm moth) protein is Virescein.